The sequence spans 157 residues: Ribonuclease H (157 aa).

One can recognise an RNase H type-1 domain in the interval N3 to T144. Positions 12, 50, 72, and 136 each coordinate Mg(2+).

This sequence belongs to the RNase H family. In terms of assembly, monomer. The cofactor is Mg(2+).

It localises to the cytoplasm. The catalysed reaction is Endonucleolytic cleavage to 5'-phosphomonoester.. Its function is as follows. Endonuclease that specifically degrades the RNA of RNA-DNA hybrids. The sequence is that of Ribonuclease H from Idiomarina loihiensis (strain ATCC BAA-735 / DSM 15497 / L2-TR).